A 796-amino-acid chain; its full sequence is Cadherin-11 (796 aa).

An N-terminal signal peptide occupies residues 1 to 24; sequence MKENYCLQAALVCLSMLYHSQAFA. Positions 25–53 are excised as a propeptide; that stretch reads LERRSHLHPSFHGHHEKGKEGQVLQRSKR. 5 consecutive Cadherin domains span residues 54–159, 160–268, 269–383, 384–486, and 487–612; these read GWVW…PPEF, LHEI…PPKF, PQSV…PPMF, LAPS…DNAP, and KFAA…YILN. Topologically, residues 54–617 are extracellular; that stretch reads GWVWNQFFVI…AYILNAGLST (564 aa). Residues Asn-455 and Asn-540 are each glycosylated (N-linked (GlcNAc...) asparagine). Residues 618–640 traverse the membrane as a helical segment; the sequence is GALIAILACIVILLVIVVLFVTL. Residues 641 to 796 lie on the Cytoplasmic side of the membrane; that stretch reads RRQKKEPLIV…GSKDTFDDDS (156 aa). Residue Ser-788 is modified to Phosphoserine. The residue at position 791 (Thr-791) is a Phosphothreonine.

Interacts with PCDH8. As to expression, selectively expressed in osteoblastic cell lines, precursor cell lines of osteoblasts, and primary osteoblastic cells from calvaria, as well as in lung, testis, and brain tissues at low levels.

The protein localises to the cell membrane. Functionally, cadherins are calcium-dependent cell adhesion proteins. They preferentially interact with themselves in a homophilic manner in connecting cells; cadherins may thus contribute to the sorting of heterogeneous cell types. Required for proper focal adhesion assembly. Involved in the regulation of cell migration. This chain is Cadherin-11 (Cdh11), found in Mus musculus (Mouse).